Here is a 396-residue protein sequence, read N- to C-terminus: Decapping nuclease RAI1 (396 aa).

Position 107-109 (107-109 (YRG)) interacts with substrate. Position 179 (Glu179) interacts with a divalent metal cation. A substrate-binding site is contributed by Glu228. Residues Asp230, Glu249, and Leu250 each coordinate a divalent metal cation. The substrate site is built by Lys251 and Gln275.

Belongs to the DXO/Dom3Z family. As to quaternary structure, interacts with RAT1; the interaction is direct, stabilizes RAT1 protein structure and stimulates its exoribonuclease activity. The interaction also stimulates RAI1 pyrophosphohydrolase activity, probably by recruiting it to mRNA substrates. A divalent metal cation is required as a cofactor.

Its subcellular location is the nucleus. It catalyses the reaction a 5'-end NAD(+)-phospho-ribonucleoside in mRNA + H2O = a 5'-end phospho-ribonucleoside in mRNA + NAD(+) + H(+). The enzyme catalyses a 5'-end (N(7)-methyl 5'-triphosphoguanosine)-ribonucleoside-ribonucleotide in mRNA + H2O = a (N(7)-methyl 5'-triphosphoguanosine)-nucleoside + a 5'-end phospho-ribonucleoside in mRNA + H(+). It carries out the reaction a 5'-end triphospho-ribonucleoside in mRNA + H2O = a 5'-end phospho-ribonucleoside in mRNA + diphosphate + H(+). Its function is as follows. Decapping enzyme for NAD-capped RNAs: specifically hydrolyzes the nicotinamide adenine dinucleotide (NAD) cap from a subset of RNAs by removing the entire NAD moiety from the 5'-end of an NAD-capped RNA. The NAD-cap is present at the 5'-end of some RNAs and snoRNAs. In contrast to the canonical 5'-end N7 methylguanosine (m7G) cap, the NAD cap promotes mRNA decay. Also acts as a non-canonical decapping enzyme that removes the entire cap structure of m7G capped or incompletely capped RNAs. Has decapping activity toward incomplete 5'-end m7G cap mRNAs such as unmethylated 5'-end-capped RNA (cap0), while it has no activity toward 2'-O-ribose methylated m7G cap (cap1). Also possesses RNA 5'-pyrophosphohydrolase activity by hydrolyzing the 5'-end triphosphate to release pyrophosphates. Stimulates exoribonuclease activity of Rat1, allowing it to degrade RNAs with stable secondary structure more effectively. The sequence is that of Decapping nuclease RAI1 from Scheffersomyces stipitis (strain ATCC 58785 / CBS 6054 / NBRC 10063 / NRRL Y-11545) (Yeast).